A 1077-amino-acid chain; its full sequence is Error-prone DNA polymerase (1077 aa).

It belongs to the DNA polymerase type-C family. DnaE2 subfamily.

It localises to the cytoplasm. The enzyme catalyses DNA(n) + a 2'-deoxyribonucleoside 5'-triphosphate = DNA(n+1) + diphosphate. In terms of biological role, DNA polymerase involved in damage-induced mutagenesis and translesion synthesis (TLS). It is not the major replicative DNA polymerase. In Brucella melitensis biotype 1 (strain ATCC 23456 / CCUG 17765 / NCTC 10094 / 16M), this protein is Error-prone DNA polymerase.